A 330-amino-acid chain; its full sequence is MKIAIDAMGGDHAPKAVVLGAMKAIKEYSDLHITLVGKEEEIRQYLTSEERITILHTDEKIESTDEPVRAVRRKKQASMVLAAQQVKDGVADACISAGSTGALMAAGLFVVGRMEGIERPALSPTMPTVDGEGFVMLDVGANVDAKPIHLYQYAVMGSVYAEKVRGIKNPRVGLLNVGTEDGKGNELSKQVFTMLKDAPINFVGNVESRDLLQGVADVVVCDGFTGNVALKSLEGTALALFSMLKEQLMSSFTSKLAAAVLKPKLMVLKDKMDYSEYGGAALFGLKAPVIKAHGSSNDQSIFSAIRQTREMVAKEVIPTISSVMEKEPLQ.

The protein belongs to the PlsX family. Homodimer. Probably interacts with PlsY.

Its subcellular location is the cytoplasm. It carries out the reaction a fatty acyl-[ACP] + phosphate = an acyl phosphate + holo-[ACP]. It participates in lipid metabolism; phospholipid metabolism. Catalyzes the reversible formation of acyl-phosphate (acyl-PO(4)) from acyl-[acyl-carrier-protein] (acyl-ACP). This enzyme utilizes acyl-ACP as fatty acyl donor, but not acyl-CoA. The sequence is that of Phosphate acyltransferase from Bacillus cereus (strain AH820).